The chain runs to 83 residues: Putative membrane protein insertion efficiency factor (83 aa).

Positions 63 to 83 are disordered; sequence GGNDPVPDHFSLRRNKTDISD. Residues 68-83 show a composition bias toward basic and acidic residues; it reads VPDHFSLRRNKTDISD.

This sequence belongs to the UPF0161 family.

It localises to the cell membrane. Its function is as follows. Could be involved in insertion of integral membrane proteins into the membrane. In Streptococcus agalactiae serotype Ia (strain ATCC 27591 / A909 / CDC SS700), this protein is Putative membrane protein insertion efficiency factor.